Here is a 396-residue protein sequence, read N- to C-terminus: Elongation factor Tu (396 aa).

One can recognise a tr-type G domain in the interval 10–206 (KLHVNVGTIG…ALDTHIPNPE (197 aa)). The tract at residues 19-26 (GHVDHGKT) is G1. 19 to 26 (GHVDHGKT) is a binding site for GTP. T26 is a Mg(2+) binding site. The G2 stretch occupies residues 60–64 (GITIS). The tract at residues 81-84 (DCPG) is G3. Residues 81–85 (DCPGH) and 136–139 (NKAD) each bind GTP. The G4 stretch occupies residues 136 to 139 (NKAD). Residues 174–176 (SAL) are G5.

Belongs to the TRAFAC class translation factor GTPase superfamily. Classic translation factor GTPase family. EF-Tu/EF-1A subfamily. As to quaternary structure, monomer.

It localises to the cytoplasm. The enzyme catalyses GTP + H2O = GDP + phosphate + H(+). GTP hydrolase that promotes the GTP-dependent binding of aminoacyl-tRNA to the A-site of ribosomes during protein biosynthesis. The polypeptide is Elongation factor Tu (Xylella fastidiosa (strain Temecula1 / ATCC 700964)).